The primary structure comprises 197 residues: EF-hand calcium-binding domain-containing protein 9 (197 aa).

Ca(2+) contacts are provided by aspartate 58 and aspartate 69. 3 consecutive EF-hand domains span residues 59 to 94 (LKKA…LLAH), 100 to 135 (GQFM…FLFN), and 136 to 171 (IQKQ…YTDK). Residues aspartate 149, aspartate 153, arginine 155, and glutamate 160 each coordinate Ca(2+). Positions 177–188 (KTEEKEKGERKR) are enriched in basic and acidic residues. Residues 177–197 (KTEEKEKGERKRSLYSKCHIK) form a disordered region.

As to quaternary structure, component of the CatSper complex or CatSpermasome composed of the core pore-forming members CATSPER1, CATSPER2, CATSPER3 and CATSPER4 as well as auxiliary members CATSPERB, CATSPERG, CATSPERD, CATSPERE, CATSPERZ, C2CD6/CATSPERT, TMEM249, TMEM262 and EFCAB9. HSPA1 may be an additional auxiliary complex member. The core complex members CATSPER1, CATSPER2, CATSPER3 and CATSPER4 form a heterotetrameric channel. The auxiliary CATSPERB, CATSPERG, CATSPERD and CATSPERE subunits form a pavilion-like structure over the pore which stabilizes the complex through interactions with CATSPER4, CATSPER3, CATSPER1 and CATSPER2 respectively. TMEM262/CATSPERH interacts with CATSPERB, further stabilizing the complex. C2CD6/CATSPERT interacts at least with CATSPERD and is required for targeting the CatSper complex in the flagellar membrane. Interacts with CATSPERZ; the interaction is direct, Ca(2+)-dependent and connects EFCAB9 with the CatSper complex. Dissociates from CATSPERZ at elevated pH.

It is found in the cytoplasm. The protein localises to the cell projection. It localises to the cilium. Its subcellular location is the flagellum. Functionally, auxiliary component of the CatSper complex, a complex involved in sperm cell hyperactivation. pH-dependent Ca(2+) sensor required to activate the CatSper channel. Sperm cell hyperactivation is needed for sperm motility which is essential late in the preparation of sperm for fertilization. Associates with the CatSper complex via direct interaction with CATSPERZ, and senses intracellular Ca(2+). Together with CATSPERZ, associates with the CatSper channel pore and is required for the two-row structure of each single CatSper channel. The sequence is that of EF-hand calcium-binding domain-containing protein 9 from Homo sapiens (Human).